We begin with the raw amino-acid sequence, 218 residues long: MAQKINPLGFRLGVTQNDRSHWFAQQRNYSKDLREDQKIRTCIENYVRTHIKSSSNYGGIARVEISRKIDLIQVKIYIGFPNLLLIEGRGFQGIEKLKNDVLNMLDSVDRKLHIAIEKVAKPYRKPNILAEYIALQLEKRVPFRKTMKKAIELAEREEVEGIQIQIAGRLDGKEIARVEWDRGGRVPLQTIRARIDYCYYPVQTIYGVLGIKIWILEE.

The 74-residue stretch at 47–120 folds into the KH type-2 domain; that stretch reads VRTHIKSSSN…KLHIAIEKVA (74 aa).

The protein belongs to the universal ribosomal protein uS3 family. Part of the 30S ribosomal subunit.

The protein resides in the plastid. It is found in the chloroplast. This Picea abies (Norway spruce) protein is Small ribosomal subunit protein uS3c (rps3).